We begin with the raw amino-acid sequence, 232 residues long: 5'-methylthioadenosine/S-adenosylhomocysteine nucleosidase (232 aa).

The Proton acceptor role is filled by Glu12. Substrate-binding positions include Gly78, Ile152, and 173–174 (ME). Asp197 (proton donor) is an active-site residue.

The protein belongs to the PNP/UDP phosphorylase family. MtnN subfamily. Homodimer.

The catalysed reaction is S-adenosyl-L-homocysteine + H2O = S-(5-deoxy-D-ribos-5-yl)-L-homocysteine + adenine. The enzyme catalyses S-methyl-5'-thioadenosine + H2O = 5-(methylsulfanyl)-D-ribose + adenine. It carries out the reaction 5'-deoxyadenosine + H2O = 5-deoxy-D-ribose + adenine. The protein operates within amino-acid biosynthesis; L-methionine biosynthesis via salvage pathway; S-methyl-5-thio-alpha-D-ribose 1-phosphate from S-methyl-5'-thioadenosine (hydrolase route): step 1/2. Catalyzes the irreversible cleavage of the glycosidic bond in both 5'-methylthioadenosine (MTA) and S-adenosylhomocysteine (SAH/AdoHcy) to adenine and the corresponding thioribose, 5'-methylthioribose and S-ribosylhomocysteine, respectively. Also cleaves 5'-deoxyadenosine, a toxic by-product of radical S-adenosylmethionine (SAM) enzymes, into 5-deoxyribose and adenine. Thus, is required for in vivo function of the radical SAM enzymes biotin synthase and lipoic acid synthase, that are inhibited by 5'-deoxyadenosine accumulation. The protein is 5'-methylthioadenosine/S-adenosylhomocysteine nucleosidase of Salmonella enteritidis PT4 (strain P125109).